The sequence spans 530 residues: Bifunctional purine biosynthesis protein PurH (530 aa).

Residues 2 to 150 enclose the MGS-like domain; sequence TDHPRRVTRA…KNHDDVAVVV (149 aa).

Belongs to the PurH family.

It carries out the reaction (6R)-10-formyltetrahydrofolate + 5-amino-1-(5-phospho-beta-D-ribosyl)imidazole-4-carboxamide = 5-formamido-1-(5-phospho-D-ribosyl)imidazole-4-carboxamide + (6S)-5,6,7,8-tetrahydrofolate. The enzyme catalyses IMP + H2O = 5-formamido-1-(5-phospho-D-ribosyl)imidazole-4-carboxamide. The protein operates within purine metabolism; IMP biosynthesis via de novo pathway; 5-formamido-1-(5-phospho-D-ribosyl)imidazole-4-carboxamide from 5-amino-1-(5-phospho-D-ribosyl)imidazole-4-carboxamide (10-formyl THF route): step 1/1. Its pathway is purine metabolism; IMP biosynthesis via de novo pathway; IMP from 5-formamido-1-(5-phospho-D-ribosyl)imidazole-4-carboxamide: step 1/1. This chain is Bifunctional purine biosynthesis protein PurH, found in Bradyrhizobium diazoefficiens (strain JCM 10833 / BCRC 13528 / IAM 13628 / NBRC 14792 / USDA 110).